Reading from the N-terminus, the 335-residue chain is Ketol-acid reductoisomerase (NADP(+)) (335 aa).

Residues Val-2–Thr-182 form the KARI N-terminal Rossmann domain. NADP(+)-binding positions include Tyr-25–Gln-28, Arg-48, Ser-51, and Asp-83–Gln-86. His-108 is an active-site residue. NADP(+) is bound at residue Gly-134. One can recognise a KARI C-terminal knotted domain in the interval Thr-183–Leu-328. Mg(2+)-binding residues include Asp-191, Glu-195, Glu-227, and Glu-231. Ser-252 contributes to the substrate binding site.

The protein belongs to the ketol-acid reductoisomerase family. Mg(2+) serves as cofactor.

It catalyses the reaction (2R)-2,3-dihydroxy-3-methylbutanoate + NADP(+) = (2S)-2-acetolactate + NADPH + H(+). The enzyme catalyses (2R,3R)-2,3-dihydroxy-3-methylpentanoate + NADP(+) = (S)-2-ethyl-2-hydroxy-3-oxobutanoate + NADPH + H(+). The protein operates within amino-acid biosynthesis; L-isoleucine biosynthesis; L-isoleucine from 2-oxobutanoate: step 2/4. It participates in amino-acid biosynthesis; L-valine biosynthesis; L-valine from pyruvate: step 2/4. Its function is as follows. Involved in the biosynthesis of branched-chain amino acids (BCAA). Catalyzes an alkyl-migration followed by a ketol-acid reduction of (S)-2-acetolactate (S2AL) to yield (R)-2,3-dihydroxy-isovalerate. In the isomerase reaction, S2AL is rearranged via a Mg-dependent methyl migration to produce 3-hydroxy-3-methyl-2-ketobutyrate (HMKB). In the reductase reaction, this 2-ketoacid undergoes a metal-dependent reduction by NADPH to yield (R)-2,3-dihydroxy-isovalerate. In Methanococcoides burtonii (strain DSM 6242 / NBRC 107633 / OCM 468 / ACE-M), this protein is Ketol-acid reductoisomerase (NADP(+)).